A 278-amino-acid polypeptide reads, in one-letter code: 4-deoxy-L-threo-5-hexosulose-uronate ketol-isomerase (278 aa).

Zn(2+) contacts are provided by His-196, His-198, Glu-203, and His-245.

It belongs to the KduI family. Requires Zn(2+) as cofactor.

The enzyme catalyses 5-dehydro-4-deoxy-D-glucuronate = 3-deoxy-D-glycero-2,5-hexodiulosonate. The protein operates within glycan metabolism; pectin degradation; 2-dehydro-3-deoxy-D-gluconate from pectin: step 4/5. Catalyzes the isomerization of 5-dehydro-4-deoxy-D-glucuronate to 3-deoxy-D-glycero-2,5-hexodiulosonate. The protein is 4-deoxy-L-threo-5-hexosulose-uronate ketol-isomerase of Yersinia pseudotuberculosis serotype O:1b (strain IP 31758).